A 675-amino-acid polypeptide reads, in one-letter code: Myosin-binding protein 3 (675 aa).

A helical membrane pass occupies residues 17-37; the sequence is ITVILVYAFLEWLLMFFIFLN. 2 disordered regions span residues 225–274 and 286–315; these read LRSI…EEET and SKNF…TPTS. Basic and acidic residues predominate over residues 238-251; it reads AKSRVSEDEQRNDD. The GTD-binding domain maps to 355-453; sequence RTIERLRETV…QLQRELEVYR (99 aa). Residues 474–496 are compositionally biased toward acidic residues; it reads CEADDDDKEEENREEDNSSEMDV. 3 disordered regions span residues 474 to 497, 542 to 565, and 582 to 605; these read CEAD…MDVD, DKES…GHGG, and AENE…GSDS. A compositionally biased stretch (basic and acidic residues) spans 596-605; that stretch reads SDEKNFGSDS. Residues 605–633 adopt a coiled-coil conformation; that stretch reads SEKLEIIKQVDSVYERLQELETDGEFLKN.

As to quaternary structure, interacts with myosin XI-K.

It localises to the membrane. Its function is as follows. Membrane-anchored myosin receptors that define a distinct, plant-specific transport vesicle compartment. This is Myosin-binding protein 3 from Arabidopsis thaliana (Mouse-ear cress).